The following is a 469-amino-acid chain: Trigger factor (469 aa).

Residues 165-250 enclose the PPIase FKBP-type domain; it reads GDRVTIDYIG…VKAVCKSDEL (86 aa). Over residues 444–460 the composition is skewed to basic and acidic residues; the sequence is DLTEKKPLKKKTAEKVS. Positions 444–469 are disordered; the sequence is DLTEKKPLKKKTAEKVSTKKKAPKKS.

The protein belongs to the FKBP-type PPIase family. Tig subfamily.

It is found in the cytoplasm. It carries out the reaction [protein]-peptidylproline (omega=180) = [protein]-peptidylproline (omega=0). In terms of biological role, involved in protein export. Acts as a chaperone by maintaining the newly synthesized protein in an open conformation. Functions as a peptidyl-prolyl cis-trans isomerase. The chain is Trigger factor from Bartonella henselae (strain ATCC 49882 / DSM 28221 / CCUG 30454 / Houston 1) (Rochalimaea henselae).